A 331-amino-acid chain; its full sequence is Germ cell-specific gene 1-like protein (331 aa).

At 1–8 the chain is on the cytoplasmic side; it reads MKTSRRGR. The chain crosses the membrane as a helical span at residues 9–29; that stretch reads ALLAVALNLLALLFATTAFLT. The Extracellular portion of the chain corresponds to 30–132; it reads THWCQGTQRV…FIDLAPASEK (103 aa). The chain crosses the membrane as a helical span at residues 133-153; it reads GVLWLSVVSEVLYILLLVVGF. The Cytoplasmic segment spans residues 154–173; the sequence is SLMCLELFHSSNVIDGLKLN. A helical transmembrane segment spans residues 174-194; that stretch reads AFAAVFTVLSGLLGMVAHMMY. At 195-217 the chain is on the extracellular side; the sequence is TQVFQVTVSLGPEDWRPHSWDYG. A helical transmembrane segment spans residues 218 to 238; that stretch reads WSFCLAWGSFTCCMAASVTTL. The Cytoplasmic segment spans residues 239–331; sequence NSYTKTVIEF…RQCWVLGHWV (93 aa).

It belongs to the GSG1 family. Component of the inner core of AMPAR complex. AMPAR complex consists of an inner core made of 4 pore-forming GluA/GRIA proteins (GRIA1, GRIA2, GRIA3 and GRIA4) and 4 major auxiliary subunits arranged in a twofold symmetry. One of the two pairs of distinct binding sites is occupied either by CNIH2, CNIH3 or CACNG2, CACNG3. The other harbors CACNG2, CACNG3, CACNG4, CACNG8 or GSG1L. This inner core of AMPAR complex is complemented by outer core constituents binding directly to the GluA/GRIA proteins at sites distinct from the interaction sites of the inner core constituents. Outer core constituents include at least PRRT1, PRRT2, CKAMP44/SHISA9, FRRS1L and NRN1. The proteins of the inner and outer core serve as a platform for other, more peripherally associated AMPAR constituents. Alone or in combination, these auxiliary subunits control the gating and pharmacology of the AMPAR complex and profoundly impact their biogenesis and protein processing.

The protein resides in the cell membrane. The protein localises to the synapse. In terms of biological role, as a component of the inner core of AMPAR complex, modifies AMPA receptor (AMPAR) gating. In Homo sapiens (Human), this protein is Germ cell-specific gene 1-like protein (GSG1L).